Consider the following 433-residue polypeptide: Ribosome biogenesis protein WDR12 homolog (433 aa).

Residues 21-102 form a ubiquitin-like (UBL) domain region; it reads VEVFVVSYRH…ESVISIECIV (82 aa). WD repeat units lie at residues 114–151, 153–194, 203–242, 270–310, 312–351, 357–397, and 401–433; these read ALLD…LTSS, LHEE…SSTF, GHER…TSTV, GHKD…QINT, AAKK…GTLV, GHCG…TPLY, and GHSD…RRKM.

Belongs to the WD repeat WDR12/YTM1 family.

It is found in the nucleus. It localises to the nucleolus. Its subcellular location is the nucleoplasm. Required for maturation of ribosomal RNAs and formation of the large ribosomal subunit. This Brugia malayi (Filarial nematode worm) protein is Ribosome biogenesis protein WDR12 homolog.